The following is a 69-amino-acid chain: Large ribosomal subunit protein eL38z/eL38y (69 aa).

This sequence belongs to the eukaryotic ribosomal protein eL38 family.

The sequence is that of Large ribosomal subunit protein eL38z/eL38y (RPL38A) from Arabidopsis thaliana (Mouse-ear cress).